The chain runs to 71 residues: Large ribosomal subunit protein bL31 (71 aa).

Residues Cys16, Cys18, Cys37, and Cys40 each coordinate Zn(2+).

Belongs to the bacterial ribosomal protein bL31 family. Type A subfamily. In terms of assembly, part of the 50S ribosomal subunit. Zn(2+) serves as cofactor.

Its function is as follows. Binds the 23S rRNA. In Pseudomonas aeruginosa (strain LESB58), this protein is Large ribosomal subunit protein bL31.